We begin with the raw amino-acid sequence, 244 residues long: SURF1-like protein (244 aa).

The next 2 helical transmembrane spans lie at 7-23 and 201-219; these read ILTTFIILTSLGFWQLS and YAITWFGLAIFLIVIYVIY.

The protein belongs to the SURF1 family.

It is found in the cell membrane. The sequence is that of SURF1-like protein from Rickettsia prowazekii (strain Madrid E).